Here is a 1697-residue protein sequence, read N- to C-terminus: UDP-sugar-dependent glycosyltransferase 52 (1697 aa).

Disordered regions lie at residues 20–40 and 142–166; these read HSDSLSSVGSSSNRSNSNYEN and STDLSNIKTTTTTTTTTTPPPLMIP. In terms of domain architecture, PH spans 234–332; the sequence is DYVLENYLYK…WYHEINRMQK (99 aa). Disordered stretches follow at residues 573–645 and 707–756; these read FRSK…TTHE and PLDK…KQSQ. Composition is skewed to low complexity over residues 584 to 628 and 711 to 722; these read QNSQ…SSSA and QQQQQQQQQQQQ. GRAM domains lie at 658–793 and 881–948; these read STFH…TKER and IKIK…KKYS. The segment covering 739 to 749 has biased composition (acidic residues); the sequence is TDSDTDSESDF. 4 disordered regions span residues 1011–1047, 1062–1085, 1110–1130, and 1466–1488; these read SPSIASPSITPPSSTPPSSTTPSSTTPTITSPTIHST, DGENNSNNNNNNNNTNNTNKSNSF, SAQQQQQQQPKTTTTTTSTTT, and EHNNNNNNNNNNNNGENSDSNKS. Low complexity-rich tracts occupy residues 1026–1047, 1065–1084, 1112–1130, and 1469–1479; these read PPSSTTPSSTTPTITSPTIHST, NNSNNNNNNNNTNNTNKSNS, QQQQQQQPKTTTTTTSTTT, and NNNNNNNNNNN. The segment at 1622 to 1685 adopts an FYVE-type zinc-finger fold; sequence SSAPNSCMGC…VCDKCFNDLQ (64 aa). Residues cysteine 1628, cysteine 1631, cysteine 1647, cysteine 1650, cysteine 1655, cysteine 1658, cysteine 1677, and cysteine 1680 each contribute to the Zn(2+) site.

It belongs to the glycosyltransferase 28 family.

The enzyme catalyses a sterol + UDP-alpha-D-glucose = a sterol 3-beta-D-glucoside + UDP + H(+). Functionally, involved in the biosynthesis of sterol glucoside. Can use different sterols such as cholesterol, sitosterol, and ergosterol as sugar acceptors. The protein is UDP-sugar-dependent glycosyltransferase 52 (ugt52) of Dictyostelium discoideum (Social amoeba).